The following is a 154-amino-acid chain: MVDVAFVCLGNICRSPMAEAIMRQRLKDRNIQDIKVHSRGTGSWNLGEPPHEGTQKILNKHNIPFDGMISELFEATDDFDYIVAMDQSNVDNIKSINPNLKGQLFKLLEFSNMEESDVPDPYYTNNFEGVYDMVLSSCDNLIDYIVKDANLKEG.

Cys-8 acts as the Nucleophile in catalysis. Arg-14 is a catalytic residue. Asp-120 acts as the Proton donor in catalysis.

It belongs to the low molecular weight phosphotyrosine protein phosphatase family. In terms of assembly, interacts with host CORO1A. Post-translationally, phosphorylations at Tyr-122 and Tyr-123 are essential for phosphatase activity.

The protein resides in the secreted. It catalyses the reaction O-phospho-L-tyrosyl-[protein] + H2O = L-tyrosyl-[protein] + phosphate. Its function is as follows. Secreted tyrosine phosphatase that plays a critical role during infection as a bacterial effector protein that counteracts host defenses. Required for intramacrophage survival. This Staphylococcus aureus (strain MRSA252) protein is Low molecular weight protein-tyrosine-phosphatase PtpA (ptpA).